A 377-amino-acid polypeptide reads, in one-letter code: Palmitoyltransferase ZDHHC16 (377 aa).

Residues 1–79 are Cytoplasmic-facing; it reads MRGQWSLLLG…WLVDNVIRWC (79 aa). Residues 80 to 100 form a helical membrane-spanning segment; sequence GVVFVVLVIVLTSSIVAIAYL. Topologically, residues 101-116 are lumenal; it reads CVLPLILQTYSVPRLC. A helical transmembrane segment spans residues 117–137; the sequence is WHFFYSHWNLILIVFHYYQAI. Topologically, residues 138-198 are cytoplasmic; that stretch reads TTPPGYPPQG…NNCVGHYNHR (61 aa). Positions 155 to 205 constitute a DHHC domain; that stretch reads SICKKCINPKPARTHHCSICNRCVLKMDHHCPWLNNCVGHYNHRYFFSFCF. Cysteine 185 serves as the catalytic S-palmitoyl cysteine intermediate. Residues 199 to 219 traverse the membrane as a helical segment; that stretch reads YFFSFCFFMTLGCVYCSYGSW. The Lumenal segment spans residues 220-266; sequence DLFREAYAAIEKMKQLDKNKLQAVANQTYHQTPPPTFSFRERVTHKS. A helical transmembrane segment spans residues 267–287; that stretch reads LVYLWFLCSSVALALGALTIW. Residues 288–377 lie on the Cytoplasmic side of the membrane; sequence HAVLISRGET…TAHSASVMAV (90 aa).

Belongs to the DHHC palmitoyltransferase family. In terms of assembly, interacts with ABL1. Interacts with COPS5/JAB1.

It localises to the endoplasmic reticulum membrane. The catalysed reaction is L-cysteinyl-[protein] + hexadecanoyl-CoA = S-hexadecanoyl-L-cysteinyl-[protein] + CoA. In terms of biological role, palmitoyl acyltransferase that mediates palmitoylation of proteins such as PLN and ZDHHC6. Required during embryonic heart development and cardiac function, possibly by mediating palmitoylation of PLN, thereby affecting PLN phosphorylation and homooligomerization. Also required for eye development. Palmitoylates ZDHHC6, affecting the quaternary assembly of ZDHHC6, its localization, stability and function. May play a role in DNA damage response. May be involved in apoptosis regulation. Involved in the proliferation of neural stem cells by regulating the FGF/ERK pathway. The polypeptide is Palmitoyltransferase ZDHHC16 (Bos taurus (Bovine)).